We begin with the raw amino-acid sequence, 103 residues long: Small ribosomal subunit protein uS10 (103 aa).

It belongs to the universal ribosomal protein uS10 family. In terms of assembly, part of the 30S ribosomal subunit.

Functionally, involved in the binding of tRNA to the ribosomes. This is Small ribosomal subunit protein uS10 from Psychrobacter sp. (strain PRwf-1).